The following is a 559-amino-acid chain: DnaJ homolog subfamily C member 11 (559 aa).

An N-acetylalanine modification is found at alanine 2. In terms of domain architecture, J spans 14 to 82; the sequence is DYYSLLNVRR…QTRAIYDIYG (69 aa). Phosphoserine is present on serine 204. The stretch at 415 to 457 forms a coiled coil; that stretch reads QKEKELEKQRENTASDILQKKQEAEAAVRLMQESVRRIIEAEE.

The protein belongs to the DNAJC11 family. Associates with the mitochondrial contact site and cristae organizing system (MICOS) complex, composed of at least MICOS10/MIC10, CHCHD3/MIC19, CHCHD6/MIC25, APOOL/MIC27, IMMT/MIC60, APOO/MIC23/MIC26 and QIL1/MIC13. This complex was also known under the names MINOS or MitOS complex. The MICOS complex associates with mitochondrial outer membrane proteins SAMM50, MTX1 and MTX2 (together described as components of the mitochondrial outer membrane sorting assembly machinery (SAM) complex) and DNAJC11, mitochondrial inner membrane protein TMEM11 and with HSPA9. The MICOS and SAM complexes together with DNAJC11 are part of a large protein complex spanning both membranes termed the mitochondrial intermembrane space bridging (MIB) complex.

Its subcellular location is the mitochondrion. The protein localises to the mitochondrion outer membrane. Its function is as follows. Required for mitochondrial inner membrane organization. Seems to function through its association with the MICOS complex and the mitochondrial outer membrane sorting assembly machinery (SAM) complex. In Mus musculus (Mouse), this protein is DnaJ homolog subfamily C member 11 (Dnajc11).